Reading from the N-terminus, the 231-residue chain is Cytidylate kinase (231 aa).

18 to 26 serves as a coordination point for ATP; that stretch reads GPSGTGKSS.

It belongs to the cytidylate kinase family. Type 1 subfamily.

It is found in the cytoplasm. The enzyme catalyses CMP + ATP = CDP + ADP. It carries out the reaction dCMP + ATP = dCDP + ADP. This is Cytidylate kinase from Streptomyces griseus subsp. griseus (strain JCM 4626 / CBS 651.72 / NBRC 13350 / KCC S-0626 / ISP 5235).